Consider the following 424-residue polypeptide: Zinc finger protein 597 (424 aa).

Residues 14–88 form the KRAB domain; it reads ILFEDLAVYF…KYPIAAPLVP (75 aa). C2H2-type zinc fingers lie at residues 156 to 178, 184 to 206, 212 to 234, and 240 to 262; these read YKCP…QKIH, HKCG…RRIH, YKCA…MNSH, and YTCS…QKSH. Residue Lys-300 forms a Glycyl lysine isopeptide (Lys-Gly) (interchain with G-Cter in SUMO2) linkage. 3 C2H2-type zinc fingers span residues 341–363, 369–391, and 397–419; these read LQCP…QNIH, HKCK…QKSH, and FKCT…KRTH.

This sequence belongs to the krueppel C2H2-type zinc-finger protein family.

It localises to the nucleus. Its function is as follows. May be involved in transcriptional regulation. This chain is Zinc finger protein 597 (ZNF597), found in Homo sapiens (Human).